The chain runs to 41 residues: Competence-stimulating peptide type 2 (41 aa).

Positions 1–24 are excised as a propeptide; the sequence is MKNTVKLEQFVALKEKDLQKIKGG.

Belongs to the ComC family.

It is found in the secreted. In terms of biological role, acts as a pheromone, induces cells to develop competence for genetic transformation. The protein is Competence-stimulating peptide type 2 (comC2) of Streptococcus pneumoniae serotype 4 (strain ATCC BAA-334 / TIGR4).